The chain runs to 314 residues: Peroxidase 2 (314 aa).

The first 23 residues, 1–23 (MASASSVSLMLLVAAAMASAASA), serve as a signal peptide directing secretion. Glutamine 24 is subject to Pyrrolidone carboxylic acid. Intrachain disulfides connect cysteine 34–cysteine 109, cysteine 67–cysteine 72, cysteine 115–cysteine 310, and cysteine 194–cysteine 219. Histidine 65 acts as the Proton acceptor in catalysis. Aspartate 66, valine 69, glycine 71, aspartate 73, and serine 75 together coordinate Ca(2+). Asparagine 148 is a glycosylation site (N-linked (GlcNAc...) asparagine). Proline 157 contacts substrate. Asparagine 169 is a glycosylation site (N-linked (GlcNAc...) asparagine). Position 187 (histidine 187) interacts with heme b. Threonine 188 serves as a coordination point for Ca(2+). A glycan (N-linked (GlcNAc...) asparagine) is linked at asparagine 203. Residues aspartate 234, threonine 237, and aspartate 242 each contribute to the Ca(2+) site. N-linked (GlcNAc...) asparagine glycans are attached at residues asparagine 274 and asparagine 309.

Belongs to the peroxidase family. Classical plant (class III) peroxidase subfamily. It depends on Ca(2+) as a cofactor. Requires heme b as cofactor.

The protein localises to the secreted. The enzyme catalyses 2 a phenolic donor + H2O2 = 2 a phenolic radical donor + 2 H2O. Its function is as follows. Removal of H(2)O(2), oxidation of toxic reductants, biosynthesis and degradation of lignin, suberization, auxin catabolism, response to environmental stresses such as wounding, pathogen attack and oxidative stress. These functions might be dependent on each isozyme/isoform in each plant tissue. The chain is Peroxidase 2 (PRX112) from Oryza sativa subsp. indica (Rice).